Consider the following 595-residue polypeptide: Aspartate--tRNA(Asp/Asn) ligase (595 aa).

An L-aspartate-binding site is contributed by Glu175. The interval 199–202 (QQYK) is aspartate. Residues Arg221 and His454 each contribute to the L-aspartate site. 221–223 (RDE) serves as a coordination point for ATP. An ATP-binding site is contributed by Glu488. Residue Arg495 participates in L-aspartate binding. 540 to 543 (GIDR) is an ATP binding site.

It belongs to the class-II aminoacyl-tRNA synthetase family. Type 1 subfamily. In terms of assembly, homodimer.

It localises to the cytoplasm. The catalysed reaction is tRNA(Asx) + L-aspartate + ATP = L-aspartyl-tRNA(Asx) + AMP + diphosphate. Its function is as follows. Aspartyl-tRNA synthetase with relaxed tRNA specificity since it is able to aspartylate not only its cognate tRNA(Asp) but also tRNA(Asn). Reaction proceeds in two steps: L-aspartate is first activated by ATP to form Asp-AMP and then transferred to the acceptor end of tRNA(Asp/Asn). The polypeptide is Aspartate--tRNA(Asp/Asn) ligase (Brucella abortus (strain S19)).